The following is a 195-amino-acid chain: Toxin protein Tse4 (195 aa).

4 helical membrane passes run 20-40 (ASGG…ITLL), 116-136 (YVEL…LFGL), 140-160 (LLAA…GASM), and 171-191 (ALLM…AAYL).

The protein resides in the host membrane. It localises to the secreted. Toxin secreted by the H1 type VI (H1-T6SS) secretion system into the periplasm of recipient cells. The chain is Toxin protein Tse4 from Pseudomonas aeruginosa (strain ATCC 15692 / DSM 22644 / CIP 104116 / JCM 14847 / LMG 12228 / 1C / PRS 101 / PAO1).